Consider the following 367-residue polypeptide: Apolipoprotein A-V (367 aa).

The signal sequence occupies residues 1–20 (MAAVITWALALLSVFATVQA). Position 52 is a phosphoserine (serine 52). The stretch at 231–255 (TRKAKDLHTSIQRNLDQLRDELSTF) forms a coiled coil. Positions 305 to 332 (EEIQHQLAPPPPSHSAFAPELGHSDSNK) are disordered.

Belongs to the apolipoprotein A1/A4/E family. Interacts with GPIHBP1. Interacts with SORL1; this interaction leads to APOA5 internalization and sorting either to lysosomes and degradation, or to the trans-Golgi network. Phosphorylated by FAM20C in the extracellular medium. Liver.

It localises to the secreted. The protein resides in the early endosome. It is found in the late endosome. Its subcellular location is the golgi apparatus. The protein localises to the trans-Golgi network. Minor apolipoprotein mainly associated with HDL and to a lesser extent with VLDL. May also be associated with chylomicrons. Important determinant of plasma triglyceride (TG) levels by both being a potent stimulator of apo-CII lipoprotein lipase (LPL) TG hydrolysis and an inhibitor of the hepatic VLDL-TG production rate (without affecting the VLDL-apoB production rate). Activates poorly lecithin:cholesterol acyltransferase (LCAT) and does not enhance efflux of cholesterol from macrophages. Binds heparin. The polypeptide is Apolipoprotein A-V (Apoa5) (Rattus norvegicus (Rat)).